The following is a 252-amino-acid chain: MATVTTQASAAIFGPCGLKSRFLGGSSGKLNRGVAFRPVGCSPSASFKVEAKKGEWLPGLASPGYLTGSLPGDNGFDPLGLAEDPENLRWFVQAELVNGRWAMLGVAGMLLPEVFTSIGIINVPKWYAAGKEEYFASSSTLFVIEFILSHYVEIRRWQDIKNPGSVNQDPIFKQYSLPAGEVGYPGGIFNPLNFAPTLEAKEKEIANGRLAMLAFLGFIIQHNVTGKGPFDNLLQHISDPWHNTIVQTLGGN.

Trp-56 serves as a coordination point for chlorophyll b. Residues Phe-76 and Glu-95 each coordinate chlorophyll a. Position 100 (Arg-100) interacts with chlorophyll b. 2 helical membrane-spanning segments follow: residues 101–121 (WAMLGVAGMLLPEVFTSIGII) and 134–154 (YFASSSTLFVIEFILSHYVEI). The chlorophyll b site is built by Ser-137, Val-143, Glu-153, and Arg-156. Lys-203, Glu-204, Asn-207, Arg-209, Gln-221, and His-236 together coordinate chlorophyll a.

The protein belongs to the light-harvesting chlorophyll a/b-binding (LHC) protein family. As to quaternary structure, the LHC complex consists of chlorophyll a-b binding proteins. Binds at least 14 chlorophylls (8 Chl-a and 6 Chl-b) and carotenoids such as lutein and neoxanthin. serves as cofactor. In terms of processing, photoregulated by reversible phosphorylation of its threonine residues.

The protein localises to the plastid. It localises to the chloroplast thylakoid membrane. Its function is as follows. The light-harvesting complex (LHC) functions as a light receptor, it captures and delivers excitation energy to photosystems with which it is closely associated. May channel protons produced in the catalytic Mn center of water oxidation into the thylakoid lumen. This chain is Chlorophyll a-b binding protein P4, chloroplastic, found in Pisum sativum (Garden pea).